A 118-amino-acid chain; its full sequence is Succinate dehydrogenase assembly factor 4, mitochondrial (118 aa).

The N-terminal 30 residues, 1–30 (MQSVTRQTARVLPQMGKQVSYLSTSGAWRA), are a transit peptide targeting the mitochondrion. A disordered region spans residues 65–118 (GKLDEFSRHPYQEKEPLKPWPNQTNPYTGEIGGPAGPEPTRYGDWERKGRVSDF). 2 stretches are compositionally biased toward basic and acidic residues: residues 66–81 (KLDE…KEPL) and 105–118 (RYGD…VSDF).

The protein belongs to the SDHAF4 family. In terms of assembly, interacts with SdhA in its FAD-bound form.

The protein resides in the mitochondrion matrix. Its function is as follows. Plays an essential role in the assembly of succinate dehydrogenase (SDH), an enzyme complex (also referred to as respiratory complex II) that is a component of both the tricarboxylic acid (TCA) cycle and the mitochondrial electron transport chain, and which couples the oxidation of succinate to fumarate with the reduction of ubiquinone (coenzyme Q) to ubiquinol. Binds to the flavoprotein subunit SdhA in its FAD-bound form, blocking the generation of excess reactive oxygen species (ROS) and facilitating its assembly with the iron-sulfur protein subunit SdhB into the SDH catalytic dimer. The protein is Succinate dehydrogenase assembly factor 4, mitochondrial of Drosophila melanogaster (Fruit fly).